The chain runs to 167 residues: Gametocyte-specific factor 1 (167 aa).

A Phosphoserine modification is found at Ser8. 2 CHHC U11-48K-type zinc fingers span residues 14 to 41 (LLQCPYDKNHQIRACRFPYHLIKCRKNH) and 48 to 75 (LATCPFNARHQVPRAEISHHISSCDDKS). Residues Cys17, His23, His33, Cys37, Cys51, His57, His67, and Cys71 each contribute to the Zn(2+) site.

This sequence belongs to the UPF0224 (FAM112) family. Expressed abundantly in adult testis, at moderate levels in unfertilized eggs and ovaries and weakly in embryonic stem cells.

The protein resides in the cytoplasm. Required for spermatogenesis and is involved in the suppression of retrotransposon transcription in male germ cells. The polypeptide is Gametocyte-specific factor 1 (Mus musculus (Mouse)).